A 150-amino-acid polypeptide reads, in one-letter code: 3-hydroxyacyl-[acyl-carrier-protein] dehydratase FabZ (150 aa).

Residue histidine 53 is part of the active site.

The protein belongs to the thioester dehydratase family. FabZ subfamily.

The protein resides in the cytoplasm. The catalysed reaction is a (3R)-hydroxyacyl-[ACP] = a (2E)-enoyl-[ACP] + H2O. Its function is as follows. Involved in unsaturated fatty acids biosynthesis. Catalyzes the dehydration of short chain beta-hydroxyacyl-ACPs and long chain saturated and unsaturated beta-hydroxyacyl-ACPs. This Photorhabdus laumondii subsp. laumondii (strain DSM 15139 / CIP 105565 / TT01) (Photorhabdus luminescens subsp. laumondii) protein is 3-hydroxyacyl-[acyl-carrier-protein] dehydratase FabZ.